A 336-amino-acid polypeptide reads, in one-letter code: Antigen-presenting glycoprotein CD1d1 (336 aa).

Positions 1–21 (MRYLPWLLLWAFLQVWGQSEA) are cleaved as a signal peptide. Residues 22–305 (QQKNYTFRCL…YWDARQAPVG (284 aa)) lie on the Extracellular side of the membrane. 3 N-linked (GlcNAc...) asparagine glycosylation sites follow: Asn-25, Asn-38, and Asn-60. Asp-98 serves as a coordination point for a D-galactosylceramide. Cystine bridges form between Cys-122–Cys-186 and Cys-226–Cys-281. Asn-128 carries N-linked (GlcNAc...) asparagine glycosylation. 171-174 (DQGT) serves as a coordination point for a D-galactosylceramide. The N-linked (GlcNAc...) asparagine glycan is linked to Asn-183. In terms of domain architecture, Ig-like spans 207-297 (PVAWLSSVPS…LGGQDIILYW (91 aa)). The helical transmembrane segment at 306–326 (LIVFIVLIMLVVVGAVVYYIW) threads the bilayer. Residues 327–336 (RRRSAYQDIR) are Cytoplasmic-facing. The Internalization signal signature appears at 332–335 (YQDI).

In terms of assembly, heterodimer with B2M (beta-2-microglobulin). Interacts with MHC II and CD74. N-glycosylated. Expressed on cortical thymocytes, on certain T-cell leukemias, and in various other tissues.

Its subcellular location is the cell membrane. It is found in the endosome membrane. The protein resides in the lysosome membrane. Antigen-presenting protein that binds self and non-self glycolipids and presents them to T-cell receptors on natural killer T-cells. This chain is Antigen-presenting glycoprotein CD1d1 (Cd1d1), found in Mus musculus (Mouse).